A 336-amino-acid chain; its full sequence is Tyrosine recombinase XerC (336 aa).

The Core-binding (CB) domain occupies 14–106 (VANCRWLGEF…SVKSFYRFLL (93 aa)). The 204-residue stretch at 127 to 330 (KIPDFLSEEE…TFNRLRDAYT (204 aa)) folds into the Tyr recombinase domain. Catalysis depends on residues arginine 183, lysine 207, histidine 282, arginine 285, and histidine 308. Tyrosine 317 functions as the O-(3'-phospho-DNA)-tyrosine intermediate in the catalytic mechanism.

The protein belongs to the 'phage' integrase family. XerC subfamily. Forms a cyclic heterotetrameric complex composed of two molecules of XerC and two molecules of XerD.

Its subcellular location is the cytoplasm. Its function is as follows. Site-specific tyrosine recombinase, which acts by catalyzing the cutting and rejoining of the recombining DNA molecules. The XerC-XerD complex is essential to convert dimers of the bacterial chromosome into monomers to permit their segregation at cell division. It also contributes to the segregational stability of plasmids. The chain is Tyrosine recombinase XerC from Chlorobaculum tepidum (strain ATCC 49652 / DSM 12025 / NBRC 103806 / TLS) (Chlorobium tepidum).